Consider the following 399-residue polypeptide: MFKKYKNQDLDMAFWWKKNPKTPSDYARLIIEQLNKFSSPSLTQDNKRKVQEECTKYLIGTKHFIVGDTDPHPTPEAIDELYTAMHRADVFYELLLHFVDLEFEARRECMLIFSICLGYSKDNKFVTVDYLVSQPKTISLMLRTAEVALQQKGCQDIFLTVGNMIIECIKYEQLCRIILKDPQLWKFFEFAKLGNFEISTESLQILSAAFTAHPKLVSKEFFSNEINIIRFIKCINKLMAHGSYVTKRQSTKLLASLIVIRSNNALMNIYINSPENLKLIMTLMTDKSKNLQLEAFNVFKVMVANPRKSKPVFDILVKNRDKLLTYFKTFGLDSQDSTFLDEREFIVQEIDSLPRIISSTTEVSNNNASSSNVASITSPSSVMNNQSSILTHSTSPDSR.

Over residues 363–382 the composition is skewed to low complexity; the sequence is VSNNNASSSNVASITSPSSV. The disordered stretch occupies residues 363–399; the sequence is VSNNNASSSNVASITSPSSVMNNQSSILTHSTSPDSR. A compositionally biased stretch (polar residues) spans 383 to 399; sequence MNNQSSILTHSTSPDSR.

Belongs to the Mo25 family.

The chain is Protein HYM1 (HYM1) from Saccharomyces cerevisiae (strain ATCC 204508 / S288c) (Baker's yeast).